Consider the following 2357-residue polypeptide: Myosin-I heavy chain (2357 aa).

One can recognise a Myosin motor domain in the interval 13 to 688 (QPVEDMITLP…QYLKLEELRK (676 aa)). 106–113 (GESGAGKT) provides a ligand contact to ATP. Residues 579–586 (YVRCIKPN) are actin-binding. The region spanning 691 to 720 (LLKKVTLIQSVWRMYRCKKRYQQIRASAKI) is the IQ domain. Positions 787–891 (KRDRNARMLE…QDKNINELDD (105 aa)) form a coiled coil. Residues 787 to 1076 (KRDRNARMLE…PILGAPPPPP (290 aa)) are binding to talin A. 2 disordered regions span residues 797-852 (IQRE…EEEL) and 974-1112 (ASSF…NPQP). 2 stretches are compositionally biased toward low complexity: residues 1003–1025 (NNNY…SDFS) and 1078–1106 (TSDS…QSTN). One can recognise a MyTH4 1 domain in the interval 1155-1313 (YQKSHIKSSL…PSVTELESIK (159 aa)). Residues 1318-1620 (IFVRITATDG…EYSLYLRNNA (303 aa)) enclose the FERM 1 domain. In terms of domain architecture, SH3 spans 1618-1678 (NNAKYARALK…PVDHVEILLS (61 aa)). Residues 1686-1849 (VHPVATLSPP…PSKRLTVSPA (164 aa)) form a disordered region. Over residues 1706 to 1733 (TPPPPPSISDSMSPPPQVGMLPPPPPPS) the composition is skewed to pro residues. 2 stretches are compositionally biased toward low complexity: residues 1734 to 1746 (VMGS…IPSL) and 1755 to 1770 (SSNS…SPMM). Over residues 1817 to 1828 (FRSSLRVSMLNT) the composition is skewed to polar residues. In terms of domain architecture, MyTH4 2 spans 1894 to 2051 (FNKDPIKESL…PSATEIQSFR (158 aa)). The 298-residue stretch at 2060–2357 (STCKIRFIDQ…ASVYQFYSSQ (298 aa)) folds into the FERM 2 domain.

Belongs to the TRAFAC class myosin-kinesin ATPase superfamily. Myosin family. As to quaternary structure, monomer. Interacts with talA.

It is found in the cytoplasm. In terms of biological role, myosins are actin-based motor molecules with ATPase activity. Involved in the early steps of phagocytosis and adhesion. This Dictyostelium discoideum (Social amoeba) protein is Myosin-I heavy chain (myoI).